We begin with the raw amino-acid sequence, 982 residues long: Pentatricopeptide repeat-containing protein At5g62370 (982 aa).

24 PPR repeats span residues 94–129, 130–164, 165–199, 200–234, 236–270, 271–305, 306–340, 341–376, 377–411, 412–446, 476–510, 511–545, 546–580, 581–615, 616–650, 651–685, 686–720, 721–755, 759–789, 793–827, 828–858, 860–894, 895–929, and 930–964; these read DSSC…GIVP, DSSV…GYAP, SRNS…GSGL, WLWC…TRMP, PVNL…GYYV, DKVM…SFEL, DPCI…GVQS, NVFT…DISR, NVHC…GIVP, DHIT…GCGI, AAVG…GCTP, LPFS…DFVP, DVDT…GLRP, TVAI…GIQP, DEIA…FLRP, SSFT…GLSP, NVVL…DIKH, DHIA…KLLQ, RTKP…VKKS, NLYL…GIVP, NLVT…TNCE, DQVM…GINP, NKDS…DIWP, and RSIN…GRSL.

It belongs to the PPR family. P subfamily.

This Arabidopsis thaliana (Mouse-ear cress) protein is Pentatricopeptide repeat-containing protein At5g62370.